The chain runs to 396 residues: Bone morphogenetic protein 2 (396 aa).

The N-terminal stretch at 1-23 is a signal peptide; that stretch reads MVAGTRCLLALLLPQVLLGGAAG. Residues 24–282 constitute a propeptide, cleaved by PCSK5; sequence LVPELGRRKF…GHPLHKREKR (259 aa). Residues 84–121 are disordered; it reads RRHSGQPGSPAPDHRLERAASRANTVRSFHHEESLEEL. The residue at position 87 (Ser87) is a Phosphoserine. N-linked (GlcNAc...) asparagine glycosylation is found at Asn135, Asn163, Asn164, and Asn200. Residues 271 to 293 are disordered; that stretch reads GKGHPLHKREKRQAKHKQRKRLK. Residues 274-293 are compositionally biased toward basic residues; it reads HPLHKREKRQAKHKQRKRLK. 3 disulfides stabilise this stretch: Cys296-Cys361, Cys325-Cys393, and Cys329-Cys395. N-linked (GlcNAc...) (high mannose) asparagine glycosylation occurs at Asn338.

The protein belongs to the TGF-beta family. As to quaternary structure, homodimer; disulfide-linked. Interacts with SOSTDC1. Interacts with GREM2, RGMA, RGMB and RGMC. Interacts with ASPN. Interacts with MAFP5. Interacts with FBN1 (via N-terminal domain) and FBN2. Interacts with type I receptor BMPR1A. Interacts with type II receptor BMPR2. Interacts with SCUBE3. Interacts with TNFAIP6 (primarily via Link domain); this interaction is inhibited by hyaluronan. Interacts with ERFE. Interacts with BMPR1A/ALK3; the interaction may induce HAMP expression. Forms heterodimers with BMP6 in vitro; the heterodimer then binds to its receptor BMPR1A /ALK3 and may induce HAMP expression. Interacts with TGFBR3. As to expression, particularly abundant in lung, spleen and colon and in low but significant levels in heart, brain, placenta, liver, skeletal muscle, kidney, pancreas, prostate, ovary and small intestine.

The protein localises to the secreted. In terms of biological role, growth factor of the TGF-beta superfamily that plays essential roles in many developmental processes, including cardiogenesis, neurogenesis, and osteogenesis. Induces cartilage and bone formation. Initiates the canonical BMP signaling cascade by associating with type I receptor BMPR1A and type II receptor BMPR2. Once all three components are bound together in a complex at the cell surface, BMPR2 phosphorylates and activates BMPR1A. In turn, BMPR1A propagates signal by phosphorylating SMAD1/5/8 that travel to the nucleus and act as activators and repressors of transcription of target genes. Also acts to promote expression of HAMP, via the interaction with its receptor BMPR1A/ALK3. Can also signal through non-canonical pathways such as ERK/MAP kinase signaling cascade that regulates osteoblast differentiation. Also stimulates the differentiation of myoblasts into osteoblasts via the EIF2AK3-EIF2A-ATF4 pathway by stimulating EIF2A phosphorylation which leads to increased expression of ATF4 which plays a central role in osteoblast differentiation. Acts as a positive regulator of odontoblast differentiation during mesenchymal tooth germ formation, expression is repressed during the bell stage by MSX1-mediated inhibition of CTNNB1 signaling. The sequence is that of Bone morphogenetic protein 2 (BMP2) from Homo sapiens (Human).